The primary structure comprises 357 residues: S-adenosylmethionine:tRNA ribosyltransferase-isomerase (357 aa).

Belongs to the QueA family. In terms of assembly, monomer.

The protein localises to the cytoplasm. The enzyme catalyses 7-aminomethyl-7-carbaguanosine(34) in tRNA + S-adenosyl-L-methionine = epoxyqueuosine(34) in tRNA + adenine + L-methionine + 2 H(+). The protein operates within tRNA modification; tRNA-queuosine biosynthesis. Transfers and isomerizes the ribose moiety from AdoMet to the 7-aminomethyl group of 7-deazaguanine (preQ1-tRNA) to give epoxyqueuosine (oQ-tRNA). This Phenylobacterium zucineum (strain HLK1) protein is S-adenosylmethionine:tRNA ribosyltransferase-isomerase.